The following is a 483-amino-acid chain: Regulatory protein ViaA (483 aa).

This sequence belongs to the ViaA family. Homodimer. Interacts with RavA.

The protein resides in the cytoplasm. Functionally, component of the RavA-ViaA chaperone complex, which may act on the membrane to optimize the function of some of the respiratory chains. ViaA stimulates the ATPase activity of RavA. This Salmonella schwarzengrund (strain CVM19633) protein is Regulatory protein ViaA.